The chain runs to 487 residues: Protein DETOXIFICATION 10 (487 aa).

Helical transmembrane passes span 35-55, 73-93, 122-142, 155-175, 184-204, 211-231, 264-284, 293-313, 333-353, 377-397, 412-432, and 435-455; these read LICFAAPMAAVVIIQFMIQII, FAVSFCNVTGFSFIIGLSCAL, LVCLPLSLLWFNMGKLIVILG, AAWLIPGLFAYAVLQPLIRYF, LLVTSSVVFCIHVPLCWLLVY, IGGALALSLSYWLYAIFLGSF, AAMLCLEWWSYELIILLSGLL, VLSICFETLSITYSIPLAIAA, IVVYAAMSLAVMDALMVSMSL, MAPLVSISIILDSLQGVLSGV, FGAFYLWGIPIAASLAFWVHL, and VGLWIGILAGAVLQTLLLALV.

It belongs to the multi antimicrobial extrusion (MATE) (TC 2.A.66.1) family.

The protein localises to the membrane. In Arabidopsis thaliana (Mouse-ear cress), this protein is Protein DETOXIFICATION 10.